A 148-amino-acid chain; its full sequence is General odorant-binding protein 69a (148 aa).

The N-terminal stretch at 1-23 (MVARHFSFFLALLILYDLIPSNQ) is a signal peptide. 3 disulfides stabilise this stretch: Cys42-Cys74, Cys70-Cys121, and Cys112-Cys130.

It belongs to the PBP/GOBP family. In terms of tissue distribution, expressed in the antenna, mostly on the anterior surface of the third antennal segment. Expressed in auxiliary cells and the third antennal segment and exported to the sensillar lymph (at protein level).

The protein localises to the secreted. Its function is as follows. Odorant-binding protein required for olfactory behavior and activity of pheromone-sensitive neurons in response to the male-specific pheromone cis-vaccenyl acetate (cVA). Modulates social responsivity differently in males and females, regulating male aggression and female receptivity respectively. This chain is General odorant-binding protein 69a (Obp69a), found in Drosophila melanogaster (Fruit fly).